A 132-amino-acid chain; its full sequence is Spermatogenesis-associated protein 33 (132 aa).

Residues 1-60 form an interaction with ATG16L1 region; sequence MGQSKSKPREKKEEEKSTTTLVTKSKEKVMEKEAKQSDKESQPAESLLFATSKHSRPSSS. Residues 1–81 are disordered; sequence MGQSKSKPRE…SKKRSVIPQI (81 aa). The segment covering 24-42 has biased composition (basic and acidic residues); it reads KSKEKVMEKEAKQSDKESQ. The segment at 61–132 is interaction with VDAC2; sequence SEDKPETKQR…IAAYDVHNTE (72 aa). The PQIIIT motif lies at 79 to 84; it reads PQIIIT. S87 is subject to Phosphoserine. The segment at 110 to 132 is disordered; it reads DWGPYHRHRSPSTIAAYDVHNTE.

As to quaternary structure, interacts (via PQIIIT motif) with PPP3R2 and PPP3CC. Interacts with VDAC2. Interacts with ATG16L1 (via WD repeats). Interacts with PPP3R1, PPP3CA and PPP3CB. Predominantly expressed in the testis (at protein level). Expressed in the sperm midpiece (at protein level).

The protein resides in the cytoplasm. It is found in the cytosol. It localises to the nucleus. Its subcellular location is the mitochondrion. Its function is as follows. Plays an important role in sperm motility and male fertility. Required for sperm midpiece flexibility and for the localization of sperm calcineurin to the mitochondria. Promotes mitophagy as well as acts as an autophagy mediator in male germline cells. Links damaged mitochondria to autophagosomes via its binding to the outer mitochondrial membrane protein VDAC2, as well as to key autophagy machinery component ATG16L1. The sequence is that of Spermatogenesis-associated protein 33 (Spata33) from Mus musculus (Mouse).